The chain runs to 302 residues: Probable 2-(5''-triphosphoribosyl)-3'-dephosphocoenzyme-A synthase 1 (302 aa).

The protein belongs to the CitG/MdcB family.

It catalyses the reaction 3'-dephospho-CoA + ATP = 2'-(5''-triphospho-alpha-D-ribosyl)-3'-dephospho-CoA + adenine. In Salmonella typhi, this protein is Probable 2-(5''-triphosphoribosyl)-3'-dephosphocoenzyme-A synthase 1.